A 114-amino-acid chain; its full sequence is MHTAIQELEKAQLRSDVPDFRPGDTLNVHVRVTEGNRTRIQVFKGVVIRRQGSGIRETFTVRKISYAVGVERTFPVHSPVIEKIEVVSRGRVRRAKLYYLRNLRGKAARIRERR.

This sequence belongs to the bacterial ribosomal protein bL19 family.

This protein is located at the 30S-50S ribosomal subunit interface and may play a role in the structure and function of the aminoacyl-tRNA binding site. The protein is Large ribosomal subunit protein bL19 of Thermobifida fusca (strain YX).